We begin with the raw amino-acid sequence, 488 residues long: Arginine biosynthesis bifunctional protein ArgJ, mitochondrial (488 aa).

Substrate-binding residues include threonine 227, lysine 250, threonine 261, glutamate 340, asparagine 483, and serine 488. Threonine 261 acts as the Nucleophile in catalysis.

It belongs to the ArgJ family. In terms of assembly, heterodimer of an alpha and a beta chain. In terms of processing, the alpha and beta chains are autoproteolytically processed from a single precursor protein within the mitochondrion.

It localises to the mitochondrion matrix. The enzyme catalyses N(2)-acetyl-L-ornithine + L-glutamate = N-acetyl-L-glutamate + L-ornithine. It catalyses the reaction L-glutamate + acetyl-CoA = N-acetyl-L-glutamate + CoA + H(+). The protein operates within amino-acid biosynthesis; L-arginine biosynthesis; L-ornithine and N-acetyl-L-glutamate from L-glutamate and N(2)-acetyl-L-ornithine (cyclic): step 1/1. Its pathway is amino-acid biosynthesis; L-arginine biosynthesis; N(2)-acetyl-L-ornithine from L-glutamate: step 1/4. Functionally, catalyzes two activities which are involved in the cyclic version of arginine biosynthesis: the synthesis of acetylglutamate from glutamate and acetyl-CoA, and of ornithine by transacetylation between acetylornithine and glutamate. The sequence is that of Arginine biosynthesis bifunctional protein ArgJ, mitochondrial from Thalassiosira pseudonana (Marine diatom).